The sequence spans 466 residues: MVDGGGGASDLLVIFGITGDLARKMTFRALYRLERHQLLDCPILGVASDDMSVGQLVKWARESIGRTEKIDDAVFDRLAGRLSYLHGDVTDSQLYDSLAELIGSACRPLYYLEMPPALFAPIVENLANVRLLERARVAVEKPFGHDLASALELNARLRAVLGEDQILRVDHFLGKQPVVELEYLRFANQALAELWDRNSISEIHITMAEDFGVEDRGKFYDAVGALRDVVQNHLLQVLALVTMEPPVGSSADDLNDKKAEVFRAMAPLDPDRCVRGQYLGYTEVAGVASDSATETYVALRTEIDNWRWAGVPIFVRAGKELPAKVTEVRLFLRRVPALAFLPNRRPAEPNQIVLRIDPDPGMRLQISAHTDDSWRDIHLDSSFAVDLGEPIRPYERLLYAGLVGDHQLFAREDSIEQTWRIVQPLLDNPGEIHRYDRGSWGPEAAQSLLRGHRGWQSPWLPRGTDA.

NADP(+) contacts are provided by residues S48, 88 to 89 (DV), and K141. H171, K175, E209, and D228 together coordinate substrate. Residue H233 is the Proton acceptor of the active site. Residues K319 and K324 each coordinate substrate.

Belongs to the glucose-6-phosphate dehydrogenase family.

It catalyses the reaction D-glucose 6-phosphate + NADP(+) = 6-phospho-D-glucono-1,5-lactone + NADPH + H(+). It functions in the pathway carbohydrate degradation; pentose phosphate pathway; D-ribulose 5-phosphate from D-glucose 6-phosphate (oxidative stage): step 1/3. Functionally, catalyzes the oxidation of glucose 6-phosphate to 6-phosphogluconolactone. The chain is Glucose-6-phosphate 1-dehydrogenase 1 from Mycobacterium tuberculosis (strain ATCC 25618 / H37Rv).